Consider the following 516-residue polypeptide: Probable serine/threonine-protein kinase WNK3 (516 aa).

The 259-residue stretch at 22-280 (GRYKEVLGKG…AKELLDDPFL (259 aa)) folds into the Protein kinase domain. ATP is bound by residues 102–105 (TEVF) and Lys152. Residue Asp169 is the Proton acceptor of the active site. The segment at 426 to 451 (SSPKAGAGDSRSPFAPRSNSKLSSAQ) is disordered. Positions 442–451 (RSNSKLSSAQ) are enriched in polar residues. Residues 457-490 (EVGVIVEKLESLLRKQREEIEEMQRDQERIVTEF) adopt a coiled-coil conformation.

This sequence belongs to the protein kinase superfamily. Ser/Thr protein kinase family. WNK subfamily.

The catalysed reaction is L-seryl-[protein] + ATP = O-phospho-L-seryl-[protein] + ADP + H(+). The enzyme catalyses L-threonyl-[protein] + ATP = O-phospho-L-threonyl-[protein] + ADP + H(+). In terms of biological role, may regulate flowering time by modulating the photoperiod pathway. The protein is Probable serine/threonine-protein kinase WNK3 (WNK3) of Arabidopsis thaliana (Mouse-ear cress).